A 469-amino-acid chain; its full sequence is Sorting and assembly machinery component 50 homolog (469 aa).

Residues 45-125 form the POTRA domain; it reads VVVQHVHFDG…LDVTFEVTEL (81 aa). At K255 the chain carries N6-methyllysine.

It belongs to the SAM50/omp85 family. Associates with the mitochondrial contact site and cristae organizing system (MICOS) complex, composed of at least MICOS10/MIC10, CHCHD3/MIC19, CHCHD6/MIC25, APOOL/MIC27, IMMT/MIC60, APOO/MIC23/MIC26 and QIL1/MIC13. This complex was also known under the names MINOS or MitOS complex. The MICOS complex associates with mitochondrial outer membrane proteins SAMM50, MTX1 and MTX2 (together described as components of the mitochondrial outer membrane sorting assembly machinery (SAM) complex) and DNAJC11, mitochondrial inner membrane protein TMEM11 and with HSPA9. The MICOS and SAM complexes together with DNAJC11 are part of a large protein complex spanning both membranes termed the mitochondrial intermembrane space bridging (MIB) complex. Interacts with IMMT/MIC60. Interacts with CHCHD3/MIC19. Interacts with ARMC1. As to quaternary structure, (Microbial infection) Interacts with parasite T.gondii RH strain MAF1b1; the interaction is probably indirect and results in the disruption of the MIB complex and the formation of SPOTs (structures positive for outer mitochondrial membrane (OMM)), a cellular response to OMM stress, which leads to the constitutive shedding of OMM vesicles.

Its subcellular location is the mitochondrion outer membrane. The protein resides in the cytoplasm. The protein localises to the mitochondrion. Its function is as follows. Plays a crucial role in the maintenance of the structure of mitochondrial cristae and the proper assembly of the mitochondrial respiratory chain complexes. Required for the assembly of TOMM40 into the TOM complex. The chain is Sorting and assembly machinery component 50 homolog (Samm50) from Mus musculus (Mouse).